We begin with the raw amino-acid sequence, 173 residues long: Alpha-crystallin A chain (173 aa).

Methionine 1 carries the N-acetylmethionine modification. The region spanning 52–162 (LFRGFMDSGI…SHSERPIPVS (111 aa)) is the sHSP domain. Zn(2+)-binding residues include histidine 100, glutamate 102, histidine 107, and histidine 154. The interval 146–173 (MMSGLDSSHSERPIPVSREEKPTSAPSS) is disordered. The span at 153-167 (SHSERPIPVSREEKP) shows a compositional bias: basic and acidic residues.

The protein belongs to the small heat shock protein (HSP20) family. Heteropolymer composed of three CRYAA and one CRYAB subunits. Inter-subunit bridging via zinc ions enhances stability, which is crucial as there is no protein turn over in the lens. Can also form homodimers and homotetramers (dimers of dimers) which serve as the building blocks of homooligomers. Within homooligomers, the zinc-binding motif is created from residues of 3 different molecules. His-100 and Glu-102 from one molecule are ligands of the zinc ion, and His-107 and His-154 residues from additional molecules complete the site with tetrahedral coordination geometry.

It is found in the cytoplasm. The protein resides in the nucleus. Its function is as follows. Contributes to the transparency and refractive index of the lens. May act as a chaperone, preventing aggregation of various proteins under a wide range of stress conditions. In Aquarana catesbeiana (American bullfrog), this protein is Alpha-crystallin A chain (CRYAA).